Reading from the N-terminus, the 24-residue chain is Formate ester dehydrogenase gamma chain (24 aa).

Heterotrimer composed of an alpha, a beta and a gamma chain.

The sequence is that of Formate ester dehydrogenase gamma chain from Amycolatopsis methanolica.